The primary structure comprises 637 residues: 1-deoxy-D-xylulose-5-phosphate synthase (637 aa).

Thiamine diphosphate contacts are provided by residues His-76 and 117-119 (GHS). Asp-148 contributes to the Mg(2+) binding site. Thiamine diphosphate contacts are provided by residues 149–150 (GA), Asn-177, Tyr-294, and Glu-381. Asn-177 contacts Mg(2+).

Belongs to the transketolase family. DXPS subfamily. As to quaternary structure, homodimer. Mg(2+) is required as a cofactor. It depends on thiamine diphosphate as a cofactor.

It carries out the reaction D-glyceraldehyde 3-phosphate + pyruvate + H(+) = 1-deoxy-D-xylulose 5-phosphate + CO2. Its pathway is metabolic intermediate biosynthesis; 1-deoxy-D-xylulose 5-phosphate biosynthesis; 1-deoxy-D-xylulose 5-phosphate from D-glyceraldehyde 3-phosphate and pyruvate: step 1/1. Its function is as follows. Catalyzes the acyloin condensation reaction between C atoms 2 and 3 of pyruvate and glyceraldehyde 3-phosphate to yield 1-deoxy-D-xylulose-5-phosphate (DXP). The sequence is that of 1-deoxy-D-xylulose-5-phosphate synthase from Neisseria meningitidis serogroup C / serotype 2a (strain ATCC 700532 / DSM 15464 / FAM18).